The primary structure comprises 418 residues: Phosphatidylcholine:ceramide cholinephosphotransferase 1 (418 aa).

In terms of domain architecture, SAM spans 12–75 (WSPKKVADWL…LDMIETLKME (64 aa)). Ser-13 is modified (phosphoserine). 5 consecutive transmembrane segments (helical) span residues 141 to 161 (FLAFLYALSCFVLTTVMISVV), 189 to 209 (FSICEINGMILVGLWLIQWLL), 220 to 240 (FFCIVGTLYLYRCITMYVTTL), 281 to 301 (MCGDYLYSGHTVMLTLTYLFI), and 309 to 329 (LWWYHWICWLLSVVGIFCILL). His-290 is an active-site residue. Catalysis depends on residues His-333 and Asp-337. The chain crosses the membrane as a helical span at residues 335–352 (TVDVVVAYYITTRLFWWY).

The protein belongs to the sphingomyelin synthase family. As to expression, widely expressed. Highest expression in the cardiovascular system.

The protein resides in the golgi apparatus membrane. The enzyme catalyses an N-acylsphing-4-enine + a 1,2-diacyl-sn-glycero-3-phosphocholine = a sphingomyelin + a 1,2-diacyl-sn-glycerol. It catalyses the reaction 1-(9Z-octadecenoyl)-2-acyl-sn-3-glycerol + a sphingomyelin = a 1-(9Z-octadecenoyl)-2-acyl-sn-glycero-3-phosphocholine + an N-acylsphing-4-enine. It carries out the reaction N-hexadecanoylsphinganine + a 1,2-diacyl-sn-glycero-3-phosphocholine = N-hexadecanoyl-sphinganine-1-phosphocholine + a 1,2-diacyl-sn-glycerol. The catalysed reaction is N-hexadecanoyl-(4R)-hydroxysphinganine + a 1,2-diacyl-sn-glycero-3-phosphocholine = N-hexadecanoyl-(4R)-hydroxysphinganine-phosphocholine + a 1,2-diacyl-sn-glycerol. The enzyme catalyses an N-acylsphing-4-enine + a 1,2-diacyl-sn-glycero-3-phosphoethanolamine = an N-acylsphing-4-enine 1-phosphoethanolamine + a 1,2-diacyl-sn-glycerol. Its pathway is sphingolipid metabolism. Major sphingomyelin synthase at the Golgi apparatus. Catalyzes the reversible transfer of phosphocholine moiety in sphingomyelin biosynthesis: in the forward reaction transfers phosphocholine head group of phosphatidylcholine (PC) on to ceramide (CER) to form ceramide phosphocholine (sphingomyelin, SM) and diacylglycerol (DAG) as by-product, and in the reverse reaction transfers phosphocholine from SM to DAG to form PC and CER. The direction of the reaction depends on the levels of CER and DAG in Golgi membranes. Converts the newly synthesized CER, that is transported from the endoplasmic reticulum to the trans-Golgi by the Cer transport protein (CERT), to SM. Can form a heteromeric complex with glucosylceramide synthase (GCS) increasing SMS activity and reducing glucosylceramide synthesis, a critical mechanism that controls the metabolic fate of CER in the Golgi. Does not use free phosphorylcholine or CDP-choline as donor. Can also transfer phosphoethanolamine head group of phosphatidylethanolamine (PE) on to CER to form ceramide phosphoethanolamine (CPE). Regulates receptor-mediated signal transduction via mitogenic DAG and proapoptotic CER, as well as via SM, a structural component of membrane rafts that serve as platforms for signal transduction and protein sorting. Plays a role in secretory transport via regulation of DAG pool at the Golgi apparatus and its downstream effects on PRKD1. This is Phosphatidylcholine:ceramide cholinephosphotransferase 1 (SGMS1) from Sus scrofa (Pig).